A 564-amino-acid polypeptide reads, in one-letter code: Zyxin (564 aa).

Ala-2 carries the N-acetylalanine modification. The segment at 30 to 141 (VAPKPKVNPF…TQLPPQPREK (112 aa)) is disordered. Composition is skewed to pro residues over residues 63-78 (IPPP…PPPL) and 93-109 (FPPP…PPAP). Residues Ser-117, Ser-144, Ser-170, and Ser-171 each carry the phosphoserine modification. The tract at residues 162–344 (NDPFKARVSS…RSPGGPGPLT (183 aa)) is disordered. Pro residues-rich tracts occupy residues 174 to 189 (VPPP…PSTK) and 197 to 214 (PLPP…PQPQ). Thr-180 is subject to Phosphothreonine. The span at 234–243 (QPVSSANTQP) shows a compositional bias: polar residues. Asymmetric dimethylarginine is present on Arg-244. Low complexity predominate over residues 255 to 275 (PKFAPVAPKFTPVVSKFSPGA). An N6-acetyllysine mark is found at Lys-256 and Lys-263. Thr-265 bears the Phosphothreonine mark. At Lys-270 the chain carries N6-acetyllysine. Phosphoserine is present on residues Ser-272 and Ser-300. Positions 294–310 (SSVSTGSPQPPSFTYAQ) are enriched in polar residues. The segment covering 311 to 322 (QKEKPLVQEKQH) has biased composition (basic and acidic residues). Residue Ser-336 is modified to Phosphoserine. LIM zinc-binding domains are found at residues 376–435 (CGKC…TLEK), 436–495 (CNTC…YAPR), and 496–562 (CSVC…SARA).

The protein belongs to the zyxin/ajuba family. As to quaternary structure, interacts, via the Pro-rich regions, with the EVH1 domains of ENAH, EVL and VASP. Interacts with the first LIM domain of TES. Interacts with SYNPO2.

Its subcellular location is the cytoplasm. The protein localises to the cytoskeleton. It localises to the cell junction. It is found in the focal adhesion. The protein resides in the nucleus. Adhesion plaque protein. Binds alpha-actinin and the CRP protein. Important for targeting TES and ENA/VASP family members to focal adhesions and for the formation of actin-rich structures. May be a component of a signal transduction pathway that mediates adhesion-stimulated changes in gene expression. The polypeptide is Zyxin (Zyx) (Mus musculus (Mouse)).